Here is a 251-residue protein sequence, read N- to C-terminus: Hydroxyacylglutathione hydrolase (251 aa).

7 residues coordinate Zn(2+): His53, His55, Asp57, His58, His110, Asp127, and His165.

The protein belongs to the metallo-beta-lactamase superfamily. Glyoxalase II family. Monomer. Zn(2+) serves as cofactor.

It carries out the reaction an S-(2-hydroxyacyl)glutathione + H2O = a 2-hydroxy carboxylate + glutathione + H(+). It participates in secondary metabolite metabolism; methylglyoxal degradation; (R)-lactate from methylglyoxal: step 2/2. In terms of biological role, thiolesterase that catalyzes the hydrolysis of S-D-lactoyl-glutathione to form glutathione and D-lactic acid. The protein is Hydroxyacylglutathione hydrolase of Salmonella paratyphi C (strain RKS4594).